A 287-amino-acid polypeptide reads, in one-letter code: Neugrin (287 aa).

The first 23 residues, methionine 1–alanine 23, serve as a signal peptide directing secretion. Positions serine 149 to valine 169 are disordered. Asparagine 202 carries N-linked (GlcNAc...) asparagine glycosylation.

The protein belongs to the neugrin family. In terms of assembly, forms a regulatory protein-RNA complex, consisting of RCC1L, NGRN, RPUSD3, RPUSD4, TRUB2, FASTKD2 and 16S mt-rRNA. Interacts with 16S mt-rRNA; this interaction is direct.

It localises to the nucleus. Its subcellular location is the secreted. The protein resides in the mitochondrion membrane. Plays an essential role in mitochondrial ribosome biogenesis. As a component of a functional protein-RNA module, consisting of RCC1L, NGRN, RPUSD3, RPUSD4, TRUB2, FASTKD2 and 16S mitochondrial ribosomal RNA (16S mt-rRNA), controls 16S mt-rRNA abundance and is required for intra-mitochondrial translation of core subunits of the oxidative phosphorylation system. The protein is Neugrin (NGRN) of Bos taurus (Bovine).